A 426-amino-acid chain; its full sequence is Enolase (426 aa).

The disordered stretch occupies residues 32–53 (TGRAAVPSGASTGAYEAHEQRD). Q163 contributes to the (2R)-2-phosphoglycerate binding site. E205 functions as the Proton donor in the catalytic mechanism. 3 residues coordinate Mg(2+): D242, E285, and D312. (2R)-2-phosphoglycerate-binding residues include K337, R366, S367, and K388. K337 serves as the catalytic Proton acceptor.

Belongs to the enolase family. It depends on Mg(2+) as a cofactor.

The protein localises to the cytoplasm. It is found in the secreted. The protein resides in the cell surface. It carries out the reaction (2R)-2-phosphoglycerate = phosphoenolpyruvate + H2O. The protein operates within carbohydrate degradation; glycolysis; pyruvate from D-glyceraldehyde 3-phosphate: step 4/5. Functionally, catalyzes the reversible conversion of 2-phosphoglycerate (2-PG) into phosphoenolpyruvate (PEP). It is essential for the degradation of carbohydrates via glycolysis. The protein is Enolase of Hyphomonas neptunium (strain ATCC 15444).